The primary structure comprises 299 residues: ATP phosphoribosyltransferase (299 aa).

The protein belongs to the ATP phosphoribosyltransferase family. Long subfamily. Equilibrium between an active dimeric form, an inactive hexameric form and higher aggregates. Interconversion between the various forms is largely reversible and is influenced by the natural substrates and inhibitors of the enzyme. Mg(2+) serves as cofactor.

The protein resides in the cytoplasm. The catalysed reaction is 1-(5-phospho-beta-D-ribosyl)-ATP + diphosphate = 5-phospho-alpha-D-ribose 1-diphosphate + ATP. It functions in the pathway amino-acid biosynthesis; L-histidine biosynthesis; L-histidine from 5-phospho-alpha-D-ribose 1-diphosphate: step 1/9. Its activity is regulated as follows. Feedback inhibited by histidine. Catalyzes the condensation of ATP and 5-phosphoribose 1-diphosphate to form N'-(5'-phosphoribosyl)-ATP (PR-ATP). Has a crucial role in the pathway because the rate of histidine biosynthesis seems to be controlled primarily by regulation of HisG enzymatic activity. This chain is ATP phosphoribosyltransferase, found in Pectobacterium atrosepticum (strain SCRI 1043 / ATCC BAA-672) (Erwinia carotovora subsp. atroseptica).